The following is a 174-amino-acid chain: Disulfide bond formation protein B (174 aa).

Residues 1 to 12 are Cytoplasmic-facing; sequence MLNWIDTAPRRI. Residues 13–29 form a helical membrane-spanning segment; that stretch reads LALISAACVAMLAFGMY. Topologically, residues 30-47 are periplasmic; it reads LQHVVGLEPCPMCIVQRY. The cysteines at positions 39 and 42 are disulfide-linked. A helical transmembrane segment spans residues 48 to 64; it reads ALIGVAVFAGLASARGQ. Topologically, residues 65–69 are cytoplasmic; it reads KGWWM. A helical transmembrane segment spans residues 70 to 87; sequence TWSVLALVAAGFGAFVAA. The Periplasmic portion of the chain corresponds to 88–143; sequence RQSWLQWYPPEIATCGRDFYGMIENYPISRAIPMIFRGSGDCTAVDWTFLGGSIAN. The cysteines at positions 102 and 129 are disulfide-linked. A helical transmembrane segment spans residues 144 to 162; the sequence is WSFVWFLLFAVLLLVLLVR. Residues 163–174 lie on the Cytoplasmic side of the membrane; it reads GGRGAPDTLARA.

Belongs to the DsbB family.

The protein resides in the cell inner membrane. Functionally, required for disulfide bond formation in some periplasmic proteins. Acts by oxidizing the DsbA protein. The sequence is that of Disulfide bond formation protein B from Acidovorax sp. (strain JS42).